Here is a 765-residue protein sequence, read N- to C-terminus: Palmitoyltransferase ZDHHC8 (765 aa).

The Cytoplasmic segment spans residues 1–13; it reads MPRSPGTRLKPAK. Residues 14–34 form a helical membrane-spanning segment; the sequence is YIPVATAAALLVGSSTLFFVF. Residues 35–52 lie on the Lumenal side of the membrane; sequence TCPWLTRAVSPAVPVYNG. The helical transmembrane segment at 53-73 threads the bilayer; that stretch reads IIFLFVLANFSMATFMDPGVF. At 74–148 the chain is on the cytoplasmic side; sequence PRADEDEDKE…NCIGRRNYRY (75 aa). One can recognise a DHHC domain in the interval 104–154; that stretch reads KWCATCHFYRPPRCSHCSVCDNCVEDFDHHCPWVNNCIGRRNYRYFFLFLL. Cys-134 functions as the S-palmitoyl cysteine intermediate in the catalytic mechanism. Residues 149–169 traverse the membrane as a helical segment; it reads FFLFLLSLSAHMVGVVAFGLV. The Lumenal portion of the chain corresponds to 170–190; it reads YVLNHAEGLGAAHTTITMAVM. A helical membrane pass occupies residues 191–211; it reads CVAGLFFIPVIGLTGFHVVLV. At 212 to 765 the chain is on the cytoplasmic side; sequence TRGRTTNEHV…VGGTTYEISV (554 aa). A disordered region spans residues 290-386; that stretch reads LKAGLGRSKS…PGPDSLTLGE (97 aa). Over residues 301–311 the composition is skewed to basic and acidic residues; that stretch reads GSLDRLDEKPL. Polar residues predominate over residues 333–348; that stretch reads PRPSSAESALSAQRTS. At Ser-337 the chain carries Phosphoserine. Omega-N-methylarginine is present on Arg-441. Residues 447 to 542 form a disordered region; it reads ALQPLRSEGG…PREPSPVRYD (96 aa). A phosphoserine mark is found at Ser-606 and Ser-627. Residues 630 to 747 are disordered; that stretch reads SLSSAVSRAP…PGPSASPARH (118 aa). The segment covering 639-655 has biased composition (polar residues); that stretch reads PRTSSSSLQADLANNNA. Over residues 671–680 the composition is skewed to pro residues; that stretch reads QGPPSPPSTP. Ser-675, Ser-682, Ser-725, and Ser-743 each carry phosphoserine.

It belongs to the DHHC palmitoyltransferase family. ERF2/ZDHHC9 subfamily.

The protein localises to the golgi apparatus membrane. Its subcellular location is the mitochondrion membrane. It catalyses the reaction L-cysteinyl-[protein] + hexadecanoyl-CoA = S-hexadecanoyl-L-cysteinyl-[protein] + CoA. Functionally, palmitoyltransferase that catalyzes the addition of palmitate onto various protein substrates and therefore functions in several unrelated biological processes. Through the palmitoylation of ABCA1 regulates the localization of the transporter to the plasma membrane and thereby regulates its function in cholesterol and phospholipid efflux. Could also pamitoylate the D(2) dopamine receptor DRD2 and regulate its stability and localization to the plasma membrane. Could also play a role in glutamatergic transmission. This is Palmitoyltransferase ZDHHC8 from Canis lupus familiaris (Dog).